Here is a 249-residue protein sequence, read N- to C-terminus: Large ribosomal subunit protein uL10m (249 aa).

Residues 1-31 (MLQLRFMPGWVPRNGFFGLKETIGTVHKRFY) constitute a mitochondrion transit peptide. Positions 226–249 (SHNDNQKPKEDVESTTDAESKGSK) are disordered.

Belongs to the universal ribosomal protein uL10 family. Component of the mitochondrial large ribosomal subunit (mt-LSU). Mature yeast 74S mitochondrial ribosomes consist of a small (37S) and a large (54S) subunit. The 37S small subunit contains a 15S ribosomal RNA (15S mt-rRNA) and 34 different proteins. The 54S large subunit contains a 21S rRNA (21S mt-rRNA) and 46 different proteins.

It localises to the mitochondrion. Its function is as follows. Component of the mitochondrial ribosome (mitoribosome), a dedicated translation machinery responsible for the synthesis of mitochondrial genome-encoded proteins, including at least some of the essential transmembrane subunits of the mitochondrial respiratory chain. The mitoribosomes are attached to the mitochondrial inner membrane and translation products are cotranslationally integrated into the membrane. In Saccharomyces cerevisiae (strain ATCC 204508 / S288c) (Baker's yeast), this protein is Large ribosomal subunit protein uL10m (MRPL11).